The primary structure comprises 381 residues: Acetylornithine deacetylase (381 aa).

Histidine 79 lines the Zn(2+) pocket. The active site involves aspartate 81. Aspartate 111 is a binding site for Zn(2+). The active site involves glutamate 143. Zn(2+) is bound by residues glutamate 144, glutamate 168, and histidine 354.

The protein belongs to the peptidase M20A family. ArgE subfamily. In terms of assembly, homodimer. Requires Zn(2+) as cofactor. It depends on Co(2+) as a cofactor. Glutathione serves as cofactor.

It localises to the cytoplasm. The catalysed reaction is N(2)-acetyl-L-ornithine + H2O = L-ornithine + acetate. It participates in amino-acid biosynthesis; L-arginine biosynthesis; L-ornithine from N(2)-acetyl-L-ornithine (linear): step 1/1. In terms of biological role, catalyzes the hydrolysis of the amide bond of N(2)-acetylated L-amino acids. Cleaves the acetyl group from N-acetyl-L-ornithine to form L-ornithine, an intermediate in L-arginine biosynthesis pathway, and a branchpoint in the synthesis of polyamines. The chain is Acetylornithine deacetylase from Buchnera aphidicola subsp. Schizaphis graminum (strain Sg).